The sequence spans 141 residues: Putative pre-16S rRNA nuclease (141 aa).

The protein belongs to the YqgF nuclease family.

It is found in the cytoplasm. Could be a nuclease involved in processing of the 5'-end of pre-16S rRNA. The protein is Putative pre-16S rRNA nuclease of Acetivibrio thermocellus (strain ATCC 27405 / DSM 1237 / JCM 9322 / NBRC 103400 / NCIMB 10682 / NRRL B-4536 / VPI 7372) (Clostridium thermocellum).